The chain runs to 331 residues: NAD-dependent protein deacetylase HST2 (331 aa).

A Deacetylase sirtuin-type domain is found at 1–262 (MPSLDDILKP…EKLCTLLGLD (262 aa)). NAD(+) contacts are provided by residues 26 to 46 (GAGISTGAGIPDFRSPDTGLY) and 109 to 112 (QNID). The active-site Proton acceptor is the His-129. Zn(2+) is bound by residues Cys-137, Cys-140, Cys-161, and Cys-164. Residues 201 to 203 (GTS), 226 to 228 (NKE), and Cys-248 each bind NAD(+). A coiled-coil region spans residues 276 to 331 (YSKAETKETKMHEIEDKLKEEAHLKEDKHTTKVDKKEKQNDANDKELEQLIDKLKI). The tract at residues 283 to 319 (ETKMHEIEDKLKEEAHLKEDKHTTKVDKKEKQNDAND) is disordered.

It belongs to the sirtuin family. Class I subfamily. The cofactor is Zn(2+).

It is found in the cytoplasm. The protein resides in the nucleus. The catalysed reaction is N(6)-acetyl-L-lysyl-[protein] + NAD(+) + H2O = 2''-O-acetyl-ADP-D-ribose + nicotinamide + L-lysyl-[protein]. NAD-dependent histone deacetylase that is involved in nuclear silencing events. Derepresses subtelomeric silencing and increases repression in nucleolar (rDNA) silencing. Its function is negatively regulated by active nuclear export. This Candida albicans (strain SC5314 / ATCC MYA-2876) (Yeast) protein is NAD-dependent protein deacetylase HST2 (HST2).